A 328-amino-acid chain; its full sequence is MSMAIKYSVIAGSGSYLPERVVSNDELAVELAQRGIQTSDEWIVERTGIRQRHLAERGVTTSVLATEAARRAMADAGVGPADLDLIIVATSTPDFVFPSTACLVQANLGAKGGAAFDVQAVCSGFAYALTTADSFVRAGRVRCALVIGAEVFSSILDWNDRSTCVLFGDGAGAVVIKAADEPGILAAQLHADGSQTKILCAAGNVAYGQVTGDPFLRMDGQAVFKQAVTVLDRSARDVCAEAGMTIDQVDWLVPHQANVRILNFLARKLNVSADRVVVTVDQHANTSAASVPLALDAARRDGRIKPGQHVLMQGVGGGFTWGSVLARM.

Catalysis depends on residues Cys122 and His255. The segment at 256–260 (QANVR) is ACP-binding. The active site involves Asn285.

The protein belongs to the thiolase-like superfamily. FabH family. Homodimer.

Its subcellular location is the cytoplasm. The catalysed reaction is malonyl-[ACP] + acetyl-CoA + H(+) = 3-oxobutanoyl-[ACP] + CO2 + CoA. It functions in the pathway lipid metabolism; fatty acid biosynthesis. In terms of biological role, catalyzes the condensation reaction of fatty acid synthesis by the addition to an acyl acceptor of two carbons from malonyl-ACP. Catalyzes the first condensation reaction which initiates fatty acid synthesis and may therefore play a role in governing the total rate of fatty acid production. Possesses both acetoacetyl-ACP synthase and acetyl transacylase activities. Its substrate specificity determines the biosynthesis of branched-chain and/or straight-chain of fatty acids. In Bordetella avium (strain 197N), this protein is Beta-ketoacyl-[acyl-carrier-protein] synthase III.